The primary structure comprises 224 residues: Large ribosomal subunit protein uL3 (224 aa).

Position 158 is an N5-methylglutamine (Q158).

This sequence belongs to the universal ribosomal protein uL3 family. Part of the 50S ribosomal subunit. Forms a cluster with proteins L14 and L19. Post-translationally, methylated by PrmB.

In terms of biological role, one of the primary rRNA binding proteins, it binds directly near the 3'-end of the 23S rRNA, where it nucleates assembly of the 50S subunit. The polypeptide is Large ribosomal subunit protein uL3 (Acidovorax sp. (strain JS42)).